We begin with the raw amino-acid sequence, 75 residues long: Neuropeptide-like protein 31 (75 aa).

A signal peptide spans 1-22 (MISTSSILVLVVLLACFMAANA). 5 positions are modified to tyrosine amide: tyrosine 29, tyrosine 39, tyrosine 49, tyrosine 56, and tyrosine 64. At tryptophan 73 the chain carries Tryptophan amide.

It belongs to the YARP (YGGW-amide related peptide) family. Expressed in hypoderm.

The protein resides in the secreted. Its function is as follows. Antimicrobial peptides that have antifungal activity against D.coniospora. Has weak antibacterial activity against Gram-positive bacteria M.luteus and Gram-negative E.coli. This Caenorhabditis elegans protein is Neuropeptide-like protein 31 (nlp-31).